A 620-amino-acid chain; its full sequence is Toxin coregulated pilus biosynthesis protein I (620 aa).

A Methyl-accepting transducer domain is found at Thr344–Arg580.

The protein belongs to the methyl-accepting chemotaxis (MCP) protein family.

The protein localises to the cell inner membrane. In terms of biological role, may function as an environmental regulator of TCP biogenesis. Negatively regulates the synthesis of the major pilin subunit of TCP (TcpA). This is Toxin coregulated pilus biosynthesis protein I (tcpI) from Vibrio cholerae serotype O1 (strain ATCC 39315 / El Tor Inaba N16961).